The following is a 483-amino-acid chain: UDP-N-acetylmuramate--L-alanine ligase (483 aa).

An ATP-binding site is contributed by 112–118; that stretch reads GTHGKTT.

This sequence belongs to the MurCDEF family.

It localises to the cytoplasm. The enzyme catalyses UDP-N-acetyl-alpha-D-muramate + L-alanine + ATP = UDP-N-acetyl-alpha-D-muramoyl-L-alanine + ADP + phosphate + H(+). It functions in the pathway cell wall biogenesis; peptidoglycan biosynthesis. Its function is as follows. Cell wall formation. The protein is UDP-N-acetylmuramate--L-alanine ligase of Ralstonia nicotianae (strain ATCC BAA-1114 / GMI1000) (Ralstonia solanacearum).